The following is a 146-amino-acid chain: Large-conductance mechanosensitive channel (146 aa).

The next 3 helical transmembrane spans lie at 21–41 (VGII…ADLI), 44–64 (IIGL…LGDG), and 83–103 (GSFI…FLLV).

It belongs to the MscL family. As to quaternary structure, homopentamer.

Its subcellular location is the cell inner membrane. Channel that opens in response to stretch forces in the membrane lipid bilayer. May participate in the regulation of osmotic pressure changes within the cell. This is Large-conductance mechanosensitive channel from Cereibacter sphaeroides (strain ATCC 17029 / ATH 2.4.9) (Rhodobacter sphaeroides).